The chain runs to 219 residues: 3,4-dihydroxy-2-butanone 4-phosphate synthase (219 aa).

Residues 28-29 (RE), Asp33, 140-144 (REGHT), and Glu164 each bind D-ribulose 5-phosphate. Glu29 lines the Mg(2+) pocket. His143 lines the Mg(2+) pocket.

Belongs to the DHBP synthase family. In terms of assembly, homodimer. The cofactor is Mg(2+). Mn(2+) is required as a cofactor.

The catalysed reaction is D-ribulose 5-phosphate = (2S)-2-hydroxy-3-oxobutyl phosphate + formate + H(+). The protein operates within cofactor biosynthesis; riboflavin biosynthesis; 2-hydroxy-3-oxobutyl phosphate from D-ribulose 5-phosphate: step 1/1. Its function is as follows. Catalyzes the conversion of D-ribulose 5-phosphate to formate and 3,4-dihydroxy-2-butanone 4-phosphate. This chain is 3,4-dihydroxy-2-butanone 4-phosphate synthase, found in Methanocorpusculum labreanum (strain ATCC 43576 / DSM 4855 / Z).